The sequence spans 151 residues: Ribosome maturation factor RimP (151 aa).

It belongs to the RimP family.

It is found in the cytoplasm. In terms of biological role, required for maturation of 30S ribosomal subunits. The sequence is that of Ribosome maturation factor RimP from Shewanella denitrificans (strain OS217 / ATCC BAA-1090 / DSM 15013).